The chain runs to 676 residues: Rho guanine nucleotide exchange factor 37 (676 aa).

Residues 1-26 form a disordered region; it reads MADFETDEASSKSESPEQEGQGSEDK. The DH domain occupies 30 to 213; the sequence is HQRLAIRELI…QDVNSNINEY (184 aa). The BAR domain occupies 254–455; sequence LKQEAGLVPR…LPHRHVSEPD (202 aa). SH3 domains lie at 506-569 and 603-666; these read GPGK…LYHP and PTMS…RTPS. Disordered regions lie at residues 568-601 and 657-676; these read HPIN…SVPT and PSNF…NLPS.

In terms of biological role, may act as a guanine nucleotide exchange factor (GEF). The chain is Rho guanine nucleotide exchange factor 37 (Arhgef37) from Rattus norvegicus (Rat).